A 141-amino-acid chain; its full sequence is Photosystem II protein PSBR, chloroplastic (141 aa).

The transit peptide at 1 to 27 (MATMQISAKGLAPLRPRVSSRRVVKPV) directs the protein to the chloroplast. Residues Thr34 and Thr37 each carry the phosphothreonine modification. Ser43 bears the Phosphoserine mark. Residues 114 to 134 (GLIAWAGLVLVLLAVGVNLII) traverse the membrane as a helical segment.

Belongs to the psbR family.

The protein resides in the plastid. It localises to the chloroplast thylakoid membrane. Its function is as follows. Associated with the oxygen-evolving complex of photosystem II (PSII). Is required for the stable binding of LHCSR3 to PSII-LHCII supercomplexes and is essential for efficient energy-dependent quenching and the integrity of the PSII-LHCII-LHCSR3 supercomplex under continuous high light. This is Photosystem II protein PSBR, chloroplastic from Chlamydomonas reinhardtii (Chlamydomonas smithii).